A 317-amino-acid polypeptide reads, in one-letter code: Melanocyte-stimulating hormone receptor (317 aa).

The Extracellular segment spans residues 1–37 (MPAQGSQRGLLGAVNFTPTATPHLRPAANQTGPQCLE). Residue N29 is glycosylated (N-linked (GlcNAc...) asparagine). The chain crosses the membrane as a helical span at residues 38-63 (VSVPDGLFLCLGLVSLVENTLVVAAI). Over 64-72 (AKNRNLHSP) the chain is Cytoplasmic. Residues 73–93 (MYCFICCLALSDLLVSVSNLL) traverse the membrane as a helical segment. Topologically, residues 94–118 (ETAVLLLLEVGALAAQATVVQQLGN) are extracellular. A helical membrane pass occupies residues 119–140 (VIDVLICSSMVSSLCSLGAIAM). Over 141–163 (DRYISIFYALRYHSIVTLARARR) the chain is Cytoplasmic. A helical membrane pass occupies residues 164–183 (AIAAVWAASILSSTLFITYY). The Extracellular segment spans residues 184-191 (DRTAALLC). Residues 192 to 211 (LVVFFLAMLVLMALLYVHML) traverse the membrane as a helical segment. Over 212 to 240 (IQACQHAQAIARLHKRQHPVQQGWGLKGA) the chain is Cytoplasmic. The chain crosses the membrane as a helical span at residues 241-266 (ATLTILLGVFFLCWGPFFLHLTLIAV). Over 267–279 (CPQHPTCSCIFKN) the chain is Extracellular. Residues 280 to 300 (FRLFLALIICNTIVDPLIYAF) traverse the membrane as a helical segment. Residues 301–317 (RSQELRRTLKEVLLFSW) lie on the Cytoplasmic side of the membrane.

This sequence belongs to the G-protein coupled receptor 1 family. In terms of assembly, interacts with MGRN1, but does not undergo MGRN1-mediated ubiquitination; this interaction competes with GNAS-binding and thus inhibits agonist-induced cAMP production. Interacts with OPN3; the interaction results in a decrease in MC1R-mediated cAMP signaling and ultimately a decrease in melanin production in melanocytes.

The protein localises to the cell membrane. In terms of biological role, receptor for MSH (alpha, beta and gamma) and ACTH. The activity of this receptor is mediated by G proteins which activate adenylate cyclase. Mediates melanogenesis, the production of eumelanin (black/brown) and phaeomelanin (red/yellow), via regulation of cAMP signaling in melanocytes. The protein is Melanocyte-stimulating hormone receptor (MC1R) of Eulemur fulvus fulvus (Brown lemur).